A 404-amino-acid polypeptide reads, in one-letter code: Imidazolonepropionase (404 aa).

Histidine 73 and histidine 75 together coordinate Fe(3+). Zn(2+) is bound by residues histidine 73 and histidine 75. Positions 82, 145, and 178 each coordinate 4-imidazolone-5-propanoate. Tyrosine 145 lines the N-formimidoyl-L-glutamate pocket. Fe(3+) is bound at residue histidine 243. Residue histidine 243 coordinates Zn(2+). A 4-imidazolone-5-propanoate-binding site is contributed by glutamine 246. A Fe(3+)-binding site is contributed by aspartate 318. Zn(2+) is bound at residue aspartate 318. N-formimidoyl-L-glutamate-binding residues include asparagine 320 and glycine 322. Serine 323 is a 4-imidazolone-5-propanoate binding site.

The protein belongs to the metallo-dependent hydrolases superfamily. HutI family. It depends on Zn(2+) as a cofactor. Requires Fe(3+) as cofactor.

It is found in the cytoplasm. It catalyses the reaction 4-imidazolone-5-propanoate + H2O = N-formimidoyl-L-glutamate. Its pathway is amino-acid degradation; L-histidine degradation into L-glutamate; N-formimidoyl-L-glutamate from L-histidine: step 3/3. In terms of biological role, catalyzes the hydrolytic cleavage of the carbon-nitrogen bond in imidazolone-5-propanoate to yield N-formimidoyl-L-glutamate. It is the third step in the universal histidine degradation pathway. The chain is Imidazolonepropionase from Bradyrhizobium sp. (strain BTAi1 / ATCC BAA-1182).